A 105-amino-acid chain; its full sequence is Small ribosomal subunit protein eS24 (105 aa).

The protein belongs to the eukaryotic ribosomal protein eS24 family.

The chain is Small ribosomal subunit protein eS24 from Haloquadratum walsbyi (strain DSM 16790 / HBSQ001).